The sequence spans 461 residues: Inositol-trisphosphate 3-kinase A (461 aa).

A disordered region spans residues 1 to 29; that stretch reads MTLPGGPTGMARPGGARPCSPGLERAPRR. The tract at residues 1-133 is required for cytoskeleton location; the sequence is MTLPGGPTGM…SVSSTGSSSL (133 aa). 3 positions are modified to omega-N-methylarginine: Arg-35, Arg-55, and Arg-62. A disordered region spans residues 49–160; it reads AAAGEPRARG…GNVQLEAGED (112 aa). Over residues 118–134 the composition is skewed to low complexity; that stretch reads RRLSTSSVSSTGSSSLL. Residues Ser-137 and Ser-197 each carry the phosphoserine modification. Residues Ser-197, Lys-209, 249 to 251, and Asp-262 contribute to the ATP site; that span reads QDL. Substrate contacts are provided by Lys-264 and Arg-285. Residues 287–295 are calmodulin-binding; sequence DMYKKMLAV. 312 to 319 contacts substrate; that stretch reads KPRYMQWR. ATP is bound by residues Lys-336 and Asp-416. Lys-419 contributes to the substrate binding site.

This sequence belongs to the inositol phosphokinase (IPK) family. In terms of tissue distribution, expressed in brain.

Its subcellular location is the cytoplasm. The protein resides in the cytoskeleton. It catalyses the reaction 1D-myo-inositol 1,4,5-trisphosphate + ATP = 1D-myo-inositol 1,3,4,5-tetrakisphosphate + ADP + H(+). With respect to regulation, activated by calcium/calmodulin. In terms of biological role, catalyzes the phosphorylation of 1D-myo-inositol 1,4,5-trisphosphate (InsP3) into 1D-myo-inositol 1,3,4,5-tetrakisphosphate and participates to the regulation of calcium homeostasis. The protein is Inositol-trisphosphate 3-kinase A of Homo sapiens (Human).